The sequence spans 271 residues: MFDWLLEPLQFEFMQNALLTALIVSIICALLSCYLVLKGWSLMGDAISHAVLPGIVLAYLAGIPLAIGAFFSGIFCSLGVGYLKENSRIKEDTAMGIVFSGMFAIGLVMFTKIQTEEHLTHILFGNVLGVSHQELIQSAVISAIIFCLIVFKRKDFLLYCFDPSHARVAGLSPKILHYGLLILLALTIVSTMQVVGVILVVAMLIAPGITALTLTKSFDKMLWVAIASSIASSLIGVILSYHFDASTGACIILLQAAFFVIALAYSKIRIR.

The next 8 membrane-spanning stretches (helical) occupy residues 17–37 (ALLT…YLVL), 55–75 (IVLA…SGIF), 93–113 (TAMG…FTKI), 131–151 (SHQE…LIVF), 168–188 (VAGL…ALTI), 194–214 (VVGV…ALTL), 221–241 (MLWV…ILSY), and 245–265 (ASTG…ALAY).

The protein belongs to the ABC-3 integral membrane protein family.

Its subcellular location is the cell inner membrane. In terms of biological role, part of an ATP-driven transport system HI_0359/HI_0360/HI_0361/HI_0362 for iron. This Haemophilus influenzae (strain ATCC 51907 / DSM 11121 / KW20 / Rd) protein is Probable iron transport system membrane protein HI_0359.